A 300-amino-acid chain; its full sequence is tRNA dimethylallyltransferase (300 aa).

11 to 18 (GPTAVGKS) lines the ATP pocket. 13 to 18 (TAVGKS) serves as a coordination point for substrate. The segment at 35-38 (DSIQ) is interaction with substrate tRNA.

It belongs to the IPP transferase family. Monomer. Mg(2+) serves as cofactor.

It catalyses the reaction adenosine(37) in tRNA + dimethylallyl diphosphate = N(6)-dimethylallyladenosine(37) in tRNA + diphosphate. Its function is as follows. Catalyzes the transfer of a dimethylallyl group onto the adenine at position 37 in tRNAs that read codons beginning with uridine, leading to the formation of N6-(dimethylallyl)adenosine (i(6)A). This Borrelia duttonii (strain Ly) protein is tRNA dimethylallyltransferase.